A 74-amino-acid polypeptide reads, in one-letter code: Protein krueppel (74 aa).

C2H2-type zinc fingers lie at residues 1 to 4 (ERTH), 10 to 32 (FECSQCHKRFTRDHHLKTHMRLH), 38 to 60 (YHCTHCDRHFVQVANLRRHLRVH), and 66 to 74 (YACELCASR).

This sequence belongs to the krueppel C2H2-type zinc-finger protein family.

It is found in the nucleus. Krueppel is a gap class segmentation protein. The protein is Protein krueppel (Kr) of Euscelis plebejus (Leafhopper).